Reading from the N-terminus, the 242-residue chain is Urease accessory protein UreF (242 aa).

The protein belongs to the UreF family. In terms of assembly, ureD, UreF and UreG form a complex that acts as a GTP-hydrolysis-dependent molecular chaperone, activating the urease apoprotein by helping to assemble the nickel containing metallocenter of UreC. The UreE protein probably delivers the nickel.

It localises to the cytoplasm. Functionally, required for maturation of urease via the functional incorporation of the urease nickel metallocenter. This chain is Urease accessory protein UreF, found in Bradyrhizobium diazoefficiens (strain JCM 10833 / BCRC 13528 / IAM 13628 / NBRC 14792 / USDA 110).